A 300-amino-acid chain; its full sequence is Putative S-adenosyl-L-methionine-dependent methyltransferase MUL_0817 (300 aa).

S-adenosyl-L-methionine-binding positions include D127 and 156 to 157; that span reads DL.

Belongs to the UPF0677 family.

Its function is as follows. Exhibits S-adenosyl-L-methionine-dependent methyltransferase activity. The sequence is that of Putative S-adenosyl-L-methionine-dependent methyltransferase MUL_0817 from Mycobacterium ulcerans (strain Agy99).